The sequence spans 423 residues: Serine--tRNA ligase (423 aa).

The tract at residues 107–130 (PHDSVPDGKSENDNREIRQWGAPP) is disordered. Basic and acidic residues predominate over residues 110–124 (SVPDGKSENDNREIR). 231 to 233 (TGE) provides a ligand contact to L-serine. 262–264 (RSE) is an ATP binding site. Residue E285 participates in L-serine binding. 349-352 (EISS) is a binding site for ATP. An L-serine-binding site is contributed by S385.

The protein belongs to the class-II aminoacyl-tRNA synthetase family. Type-1 seryl-tRNA synthetase subfamily. Homodimer. The tRNA molecule binds across the dimer.

The protein localises to the cytoplasm. The enzyme catalyses tRNA(Ser) + L-serine + ATP = L-seryl-tRNA(Ser) + AMP + diphosphate + H(+). It carries out the reaction tRNA(Sec) + L-serine + ATP = L-seryl-tRNA(Sec) + AMP + diphosphate + H(+). It functions in the pathway aminoacyl-tRNA biosynthesis; selenocysteinyl-tRNA(Sec) biosynthesis; L-seryl-tRNA(Sec) from L-serine and tRNA(Sec): step 1/1. In terms of biological role, catalyzes the attachment of serine to tRNA(Ser). Is also able to aminoacylate tRNA(Sec) with serine, to form the misacylated tRNA L-seryl-tRNA(Sec), which will be further converted into selenocysteinyl-tRNA(Sec). The sequence is that of Serine--tRNA ligase from Coxiella burnetii (strain Dugway 5J108-111).